We begin with the raw amino-acid sequence, 149 residues long: Large ribosomal subunit protein bL9 (149 aa).

It belongs to the bacterial ribosomal protein bL9 family.

Its function is as follows. Binds to the 23S rRNA. This chain is Large ribosomal subunit protein bL9, found in Histophilus somni (strain 129Pt) (Haemophilus somnus).